A 949-amino-acid polypeptide reads, in one-letter code: MVKIMPNLPGLYFLQAYPSEEIWRLFVDGRFWSKENGWRGYESREPGCLNAALESLCSIALQVEKSGEEFELSVDLIKRIHKKCGKKVEELQEKNPGELRTDEPVSFGIPAGRASIKGIEEFLSLVFLTEGGAEFGPGKAGPFGPRFDKNYFKNLNPEQIPDLAKQIYFDMCKYGHSNTNHFYLAVMKNVDVYLEKITQSYNKEIKTAETLDEKLKIIVKHIRMYEVLHPFRDANGRTFVNNLLNILLMQQGLPPATFYEPNVFDLYSAEELVVVVKEAIFNTVEIIEQSKRKTPITLYGYHSSLEEQTKFRDMLDSPSYEKIKHMDFSDLNPEKLHLKTQKCLSSLNEQYPLHRGAIYLSDPGEIKLLLSNRNESQINQQIEQGAPPIYVGKTPAHLAVISGNMAMLDELIAKKADLSLQDYDGKTALHYAAECGNMQIMGKILKVVLSQEDAIKVLNIKDNHGKTAFHYAAEFGTPELISALTTTEVIQINEPDNSGSSAITLAYKNHKLKIFDELLNSGADISDELLDAIWARKDKETLGKIIAKNEKILLNKEAFRIAISLGSVSLVKKFLRAGVDIDIPLTKDKATPLMLSINSGNPKLVSYLLKKGANTRLTDTSGNSVLHYVFYSKAENREALANIITEKDKKLINQPNANGNPPLYNAVVVNDLKMATILLEMGARVDFEDRLGNNILHSAMRRCDLPIILDIVKKDSTLLHKRNSERRNPFHQALHEMHTFPSSKETEEIHFMNLSDLLLKEGVDLNKKDIKGKTILDIALSKQYFHLCVKLMKAGAHTNISSPSKFLKNSDANSILERPFKFKNDLKKELDNNPLIAMAQINDLYVQIKNNRIRTPTGYAPKEGVSFFKGKSNDAKAHDEVLSVLKELYDSKLTEMLGNLPGEGLEEIKRSQKFFDGELKLLIKNQDISRKVDKKSIQEAVGTSLKLKW.

One can recognise a Fido domain in the interval 155 to 289 (LNPEQIPDLA…IFNTVEIIEQ (135 aa)). 10 ANK repeats span residues 391-420 (VGKT…DLSL), 424-453 (DGKT…SQED), 464-494 (HGKT…QINE), 498-527 (SGSS…DISD), 554-583 (LNKE…DIDI), 588-617 (DKAT…NTRL), 658-687 (NGNP…RVDF), 691-720 (LGNN…TLLH), 725-767 (ERRN…DLNK), and 771-800 (KGKT…HTNI).

Its subcellular location is the secreted. It is found in the host cytoplasm. It carries out the reaction [Rab1 protein]-L-serine + CDP-choline = [Rab1 protein]-O-phosphocholine-L-serine + CMP + H(+). In terms of biological role, virulence effector that plays a role in hijacking the host vesicular trafficking by recruiting the small guanosine triphosphatase (GTPase) Rab1 to the cytosolic face of the Legionella-containing vacuole (LCVs). Acts as a phosphocholine transferase by mediating the addition of phosphocholine to Ser residues of host RAB1 (RAB1A, RAB1B or RAB1C) and RAB35, leading to displacement of GDP dissociation inhibitors (GDI). Phosphocholination of target proteins also impairs accessibility to GTPase effector LepB. Can act on both GDP-bound and GTP-bound Rab proteins. This Legionella pneumophila subsp. pneumophila (strain Philadelphia 1 / ATCC 33152 / DSM 7513) protein is Phosphocholine transferase AnkX (ankX).